The chain runs to 226 residues: MSAPLTWHDVIGNEKEQPYFLDTLAYVAKERQAGKTIYPPQQDVFNAFRYTELADIKVVILGQDPYHGPNQAHGLSFSVQPGIPAPPSLVNMYKELASDIPDFQHPNHGCLISWAKQGVLLLNTVLTVERGNAHSHANLGWETFTDKVIAAINEHRSGVVFLLWGSHAQKKGYFIDANKHHVLKAPHPSPLSAHRGFFGCQHFSKANTLLEKQGIAPINWTPELPQ.

Asp-64 (proton acceptor) is an active-site residue.

Belongs to the uracil-DNA glycosylase (UDG) superfamily. UNG family.

The protein localises to the cytoplasm. It catalyses the reaction Hydrolyzes single-stranded DNA or mismatched double-stranded DNA and polynucleotides, releasing free uracil.. Its function is as follows. Excises uracil residues from the DNA which can arise as a result of misincorporation of dUMP residues by DNA polymerase or due to deamination of cytosine. The polypeptide is Uracil-DNA glycosylase (Photorhabdus laumondii subsp. laumondii (strain DSM 15139 / CIP 105565 / TT01) (Photorhabdus luminescens subsp. laumondii)).